The following is a 150-amino-acid chain: D-aminoacyl-tRNA deacylase (150 aa).

The Gly-cisPro motif, important for rejection of L-amino acids motif lies at 138–139 (GP).

It belongs to the DTD family. As to quaternary structure, homodimer.

The protein localises to the cytoplasm. The enzyme catalyses glycyl-tRNA(Ala) + H2O = tRNA(Ala) + glycine + H(+). It catalyses the reaction a D-aminoacyl-tRNA + H2O = a tRNA + a D-alpha-amino acid + H(+). Its function is as follows. An aminoacyl-tRNA editing enzyme that deacylates mischarged D-aminoacyl-tRNAs. Also deacylates mischarged glycyl-tRNA(Ala), protecting cells against glycine mischarging by AlaRS. Acts via tRNA-based rather than protein-based catalysis; rejects L-amino acids rather than detecting D-amino acids in the active site. By recycling D-aminoacyl-tRNA to D-amino acids and free tRNA molecules, this enzyme counteracts the toxicity associated with the formation of D-aminoacyl-tRNA entities in vivo and helps enforce protein L-homochirality. The sequence is that of D-aminoacyl-tRNA deacylase from Salinibacter ruber (strain DSM 13855 / M31).